Here is a 176-residue protein sequence, read N- to C-terminus: ATP-dependent protease subunit HslV (176 aa).

Thr2 is an active-site residue. Na(+)-binding residues include Gly157, Cys160, and Thr163.

Belongs to the peptidase T1B family. HslV subfamily. In terms of assembly, a double ring-shaped homohexamer of HslV is capped on each side by a ring-shaped HslU homohexamer. The assembly of the HslU/HslV complex is dependent on binding of ATP.

Its subcellular location is the cytoplasm. It carries out the reaction ATP-dependent cleavage of peptide bonds with broad specificity.. Its activity is regulated as follows. Allosterically activated by HslU binding. In terms of biological role, protease subunit of a proteasome-like degradation complex believed to be a general protein degrading machinery. In Pseudomonas savastanoi pv. phaseolicola (strain 1448A / Race 6) (Pseudomonas syringae pv. phaseolicola (strain 1448A / Race 6)), this protein is ATP-dependent protease subunit HslV.